The chain runs to 490 residues: Aspartyl/glutamyl-tRNA(Asn/Gln) amidotransferase subunit B (490 aa).

Belongs to the GatB/GatE family. GatB subfamily. In terms of assembly, heterotrimer of A, B and C subunits.

The catalysed reaction is L-glutamyl-tRNA(Gln) + L-glutamine + ATP + H2O = L-glutaminyl-tRNA(Gln) + L-glutamate + ADP + phosphate + H(+). The enzyme catalyses L-aspartyl-tRNA(Asn) + L-glutamine + ATP + H2O = L-asparaginyl-tRNA(Asn) + L-glutamate + ADP + phosphate + 2 H(+). In terms of biological role, allows the formation of correctly charged Asn-tRNA(Asn) or Gln-tRNA(Gln) through the transamidation of misacylated Asp-tRNA(Asn) or Glu-tRNA(Gln) in organisms which lack either or both of asparaginyl-tRNA or glutaminyl-tRNA synthetases. The reaction takes place in the presence of glutamine and ATP through an activated phospho-Asp-tRNA(Asn) or phospho-Glu-tRNA(Gln). This Methylorubrum extorquens (strain PA1) (Methylobacterium extorquens) protein is Aspartyl/glutamyl-tRNA(Asn/Gln) amidotransferase subunit B.